A 61-amino-acid polypeptide reads, in one-letter code: Large ribosomal subunit protein bL32 (61 aa).

The segment covering 1-19 (MAHPKRRQSKTRTAKRRTH) has biased composition (basic residues). A disordered region spans residues 1-20 (MAHPKRRQSKTRTAKRRTHD).

Belongs to the bacterial ribosomal protein bL32 family.

The polypeptide is Large ribosomal subunit protein bL32 (Porphyromonas gingivalis (strain ATCC 33277 / DSM 20709 / CIP 103683 / JCM 12257 / NCTC 11834 / 2561)).